We begin with the raw amino-acid sequence, 830 residues long: Leucine--tRNA ligase (830 aa).

Residues 42-52 (PYPSGNLHMGH) carry the 'HIGH' region motif. The short motif at 585–589 (KMSKS) is the 'KMSKS' region element. Position 588 (lysine 588) interacts with ATP.

This sequence belongs to the class-I aminoacyl-tRNA synthetase family.

Its subcellular location is the cytoplasm. It carries out the reaction tRNA(Leu) + L-leucine + ATP = L-leucyl-tRNA(Leu) + AMP + diphosphate. In Halothermothrix orenii (strain H 168 / OCM 544 / DSM 9562), this protein is Leucine--tRNA ligase.